The chain runs to 597 residues: Fructan 1-exohydrolase (597 aa).

Residues 1 to 15 form the signal peptide; sequence MAQAWAFLLPVLVFG. Asp76 is an active-site residue. 3 N-linked (GlcNAc...) asparagine glycosylation sites follow: Asn169, Asn237, and Asn249. An intrachain disulfide couples Cys447 to Cys493. Asn568 is a glycosylation site (N-linked (GlcNAc...) asparagine).

The protein belongs to the glycosyl hydrolase 32 family.

The catalysed reaction is Hydrolysis of terminal, non-reducing (2-&gt;1)-linked beta-D-fructofuranose residues in fructans.. With respect to regulation, inhibited by sucrose. Its function is as follows. Hydrolyzes inulin-type beta-(2,1)-fructans. May play a role as a beta-(2,1)-trimmer during graminan biosynthesis. This is Fructan 1-exohydrolase from Triticum urartu (Red wild einkorn).